Consider the following 202-residue polypeptide: Putative NADH dehydrogenase/NAD(P)H nitroreductase SCO7141 (202 aa).

This sequence belongs to the nitroreductase family. HadB/RutE subfamily. FMN is required as a cofactor.

In Streptomyces coelicolor (strain ATCC BAA-471 / A3(2) / M145), this protein is Putative NADH dehydrogenase/NAD(P)H nitroreductase SCO7141.